Here is a 480-residue protein sequence, read N- to C-terminus: ATP synthase subunit beta (480 aa).

ATP is bound at residue 158-165 (GGAGVGKT).

The protein belongs to the ATPase alpha/beta chains family. F-type ATPases have 2 components, CF(1) - the catalytic core - and CF(0) - the membrane proton channel. CF(1) has five subunits: alpha(3), beta(3), gamma(1), delta(1), epsilon(1). CF(0) has three main subunits: a(1), b(2) and c(9-12). The alpha and beta chains form an alternating ring which encloses part of the gamma chain. CF(1) is attached to CF(0) by a central stalk formed by the gamma and epsilon chains, while a peripheral stalk is formed by the delta and b chains.

The protein resides in the cell inner membrane. It carries out the reaction ATP + H2O + 4 H(+)(in) = ADP + phosphate + 5 H(+)(out). Functionally, produces ATP from ADP in the presence of a proton gradient across the membrane. The catalytic sites are hosted primarily by the beta subunits. The polypeptide is ATP synthase subunit beta (Acidobacterium capsulatum (strain ATCC 51196 / DSM 11244 / BCRC 80197 / JCM 7670 / NBRC 15755 / NCIMB 13165 / 161)).